A 486-amino-acid polypeptide reads, in one-letter code: Histamine H1 receptor (486 aa).

Topologically, residues 1-29 are extracellular; that stretch reads MSFANTSSTFEDKMCEGNRTAMASPQLLP. N-linked (GlcNAc...) asparagine glycans are attached at residues N5 and N18. A helical membrane pass occupies residues 30–50; the sequence is LVVVLSSISLVTVGLNLLVLY. At 51-64 the chain is on the cytoplasmic side; the sequence is AVHSERKLHTVGNL. A helical membrane pass occupies residues 65–89; it reads YIVSLSVADLIVGAVVMPMNILYLI. Residues 90–97 lie on the Extracellular side of the membrane; the sequence is MTKWSLGR. The chain crosses the membrane as a helical span at residues 98–123; the sequence is PLCLFWLSMDYVASTASIFSVFILCI. C100 and C180 are joined by a disulfide. D107 and T112 together coordinate histamine. Residues 107-112 form an important for agonist binding region; it reads DYVAST. Residues 124–144 lie on the Cytoplasmic side of the membrane; sequence DRYRSVQQPLRYLRYRTKTRA. 2 positions are modified to phosphothreonine: T140 and T142. A helical membrane pass occupies residues 145–164; sequence SATILGAWFFSFLWVIPILG. Residues 165-188 lie on the Extracellular side of the membrane; it reads WHHFMPPAPELREDKCETDFYNVT. The helical transmembrane segment at 189 to 211 threads the bilayer; the sequence is WFKIMTAIINFYLPTLLMLWFYV. Histamine is bound at residue N198. Residues 212-415 lie on the Cytoplasmic side of the membrane; that stretch reads KIYKAVRRHC…LNRERKAAKQ (204 aa). At S230 the chain carries Phosphoserine. A compositionally biased stretch (basic and acidic residues) spans 241-253; that stretch reads SDDTKEGAKKPGR. 2 disordered regions span residues 241–295 and 310–379; these read SDDT…GERE and VAEG…RSGS. Phosphoserine occurs at positions 342 and 345. Residues 347 to 365 show a composition bias toward polar residues; that stretch reads DQTLVDQQSFSRTTDSDTS. Residues S379, S381, S395, and S397 each carry the phosphoserine modification. The helical transmembrane segment at 416–439 threads the bilayer; sequence LGFIMAAFILCWIPYFIFFMVIAF. The interval 423–427 is important for agonist binding; it reads FILCW. Histamine is bound at residue Y430. Cysteines 440 and 443 form a disulfide. The Extracellular portion of the chain corresponds to 440-445; sequence CKSCCS. Residues 446–468 form a helical membrane-spanning segment; that stretch reads EPMHMFTIWLGYINSTLNPLIYP. The Cytoplasmic segment spans residues 469–486; sequence LCNENFKKTFKKILHIRS.

Belongs to the G-protein coupled receptor 1 family. Post-translationally, phosphorylation at sites in the second and third cytoplasmic loops independently contribute to agonist-induced receptor down-regulation.

The protein localises to the cell membrane. Its function is as follows. G-protein-coupled receptor for histamine, a biogenic amine that functions as an immune modulator and a neurotransmitter. Through the H1 receptor, histamine mediates the contraction of smooth muscles and increases capillary permeability due to contraction of terminal venules. Also mediates neurotransmission in the central nervous system and thereby regulates circadian rhythms, emotional and locomotor activities as well as cognitive functions. This is Histamine H1 receptor from Rattus norvegicus (Rat).